The following is a 306-amino-acid chain: Protodermal factor 1 (306 aa).

Positions M1–A23 are cleaved as a signal peptide. The span at P40 to S56 shows a compositional bias: low complexity. The interval P40–D156 is disordered. Residues P62–S83 are compositionally biased toward pro residues. A compositionally biased stretch (low complexity) spans T84–T99. Residues S139–I154 show a composition bias toward pro residues.

Confined to the shoot apical meristem (SAM) at the layer L1 in vegetative, infloresence and floral meristems, as well as in protoderm of organ primordia, including during embryogenesis. Also present in the tip of emerging lateral root primordia.

May be involved in the regulation of meristem growth. The sequence is that of Protodermal factor 1 (PDF1) from Arabidopsis thaliana (Mouse-ear cress).